Here is a 165-residue protein sequence, read N- to C-terminus: 6,7-dimethyl-8-ribityllumazine synthase (165 aa).

5-amino-6-(D-ribitylamino)uracil-binding positions include W26, 58–60 (SIE), and 80–82 (VVI). (2S)-2-hydroxy-3-oxobutyl phosphate is bound at residue 85–86 (GT). H88 serves as the catalytic Proton donor. Residue N113 participates in 5-amino-6-(D-ribitylamino)uracil binding. Position 127 (R127) interacts with (2S)-2-hydroxy-3-oxobutyl phosphate.

Belongs to the DMRL synthase family.

It carries out the reaction (2S)-2-hydroxy-3-oxobutyl phosphate + 5-amino-6-(D-ribitylamino)uracil = 6,7-dimethyl-8-(1-D-ribityl)lumazine + phosphate + 2 H2O + H(+). The protein operates within cofactor biosynthesis; riboflavin biosynthesis; riboflavin from 2-hydroxy-3-oxobutyl phosphate and 5-amino-6-(D-ribitylamino)uracil: step 1/2. In terms of biological role, catalyzes the formation of 6,7-dimethyl-8-ribityllumazine by condensation of 5-amino-6-(D-ribitylamino)uracil with 3,4-dihydroxy-2-butanone 4-phosphate. This is the penultimate step in the biosynthesis of riboflavin. The polypeptide is 6,7-dimethyl-8-ribityllumazine synthase (Saccharopolyspora erythraea (strain ATCC 11635 / DSM 40517 / JCM 4748 / NBRC 13426 / NCIMB 8594 / NRRL 2338)).